The primary structure comprises 377 residues: MHVLVLGSGQLARMMSLAGAPLNIQISAYDVGSGNVVHPLTQQVLGHGLENAIEQVDAITAEFEHIPHDVLDICELSGKFLPSTAAIKAGGDRRVEKALLDNAGVRNAKHYVIETREDFERAIEHVGIPMVLKSALGGYDGKGQWRLKEAAQIETIWAEMAECIAATPTQAIVAEEFVPFNREVSLVGARGKDGSVEVYPLAENVHTNGVLSLSTAIDAPELQAQAKQMFTAVADSLNYVGVLALEFFDVEGTLLVNEIAPRVHNSGHWTQQGAETCQFENHLRAVCGLPLGSTKLIRETSMVNILGEDTLPEALLAMDGCHIHWYGKEKREGRKMGHINVCGDYPGELHRRLCALAEVLDPMIFPAVHEFAKQAQR.

Residues Arg93, Lys133, 138–144 (GYDGKGQ), 175–178 (EEFV), Glu183, His206, and 257–258 (NE) each bind ATP. The 191-residue stretch at 97–287 (KALLDNAGVR…QFENHLRAVC (191 aa)) folds into the ATP-grasp domain.

It belongs to the PurK/PurT family. As to quaternary structure, homodimer.

It carries out the reaction 5-amino-1-(5-phospho-beta-D-ribosyl)imidazole + hydrogencarbonate + ATP = 5-carboxyamino-1-(5-phospho-D-ribosyl)imidazole + ADP + phosphate + 2 H(+). It functions in the pathway purine metabolism; IMP biosynthesis via de novo pathway; 5-amino-1-(5-phospho-D-ribosyl)imidazole-4-carboxylate from 5-amino-1-(5-phospho-D-ribosyl)imidazole (N5-CAIR route): step 1/2. Functionally, catalyzes the ATP-dependent conversion of 5-aminoimidazole ribonucleotide (AIR) and HCO(3)(-) to N5-carboxyaminoimidazole ribonucleotide (N5-CAIR). This chain is N5-carboxyaminoimidazole ribonucleotide synthase, found in Vibrio parahaemolyticus serotype O3:K6 (strain RIMD 2210633).